Reading from the N-terminus, the 419-residue chain is MSLLAVGINHNTASVELREKVAFGPDKLSEALKQLNANAHVNGSVILSTCNRTEVYCDVKGVAKNKLIDWLSVFHQVSPEELKPSIYIHEEQAAIKHLMRVACGLDSLVLGEPQILGQVKQAYTDSRDNKSVDASMEKLFQKSFSVAKRVRTETEIGGSAVSVAYAACTLAKHIFESIAESTVLLVGAGETIELVAKHLSANGCTKMIVANRTRERALGLAEEFGAEVISLNEIPDHLHRADIVISSTASPLPIIGKGMVETALKTRKHQPMLLVDIAVPRDVESQVGDLNDAYLYSVDDLQSIVDGNIEQRKVEAIQAEAIVSEESAAFMSWMRSLQAVDSIRDYRKSANEIREELLSKSLQSLAAGGDPEKVLLELSNKLTNKLIHAPTRALQSAAEQGEPAKLTVIRQSLGLENPQ.

Residues 49–52 (TCNR), S107, 112–114 (EPQ), and Q118 each bind substrate. The Nucleophile role is filled by C50. 187–192 (GAGETI) lines the NADP(+) pocket.

The protein belongs to the glutamyl-tRNA reductase family. In terms of assembly, homodimer.

The enzyme catalyses (S)-4-amino-5-oxopentanoate + tRNA(Glu) + NADP(+) = L-glutamyl-tRNA(Glu) + NADPH + H(+). It functions in the pathway porphyrin-containing compound metabolism; protoporphyrin-IX biosynthesis; 5-aminolevulinate from L-glutamyl-tRNA(Glu): step 1/2. Catalyzes the NADPH-dependent reduction of glutamyl-tRNA(Glu) to glutamate 1-semialdehyde (GSA). The sequence is that of Glutamyl-tRNA reductase from Vibrio atlanticus (strain LGP32) (Vibrio splendidus (strain Mel32)).